A 131-amino-acid chain; its full sequence is Small ribosomal subunit protein uS8 (131 aa).

The protein belongs to the universal ribosomal protein uS8 family. In terms of assembly, part of the 30S ribosomal subunit. Contacts proteins S5 and S12.

Its function is as follows. One of the primary rRNA binding proteins, it binds directly to 16S rRNA central domain where it helps coordinate assembly of the platform of the 30S subunit. This chain is Small ribosomal subunit protein uS8, found in Chlorobium limicola (strain DSM 245 / NBRC 103803 / 6330).